We begin with the raw amino-acid sequence, 485 residues long: E3 ubiquitin-protein ligase RNF8 (485 aa).

The region spanning 38-92 is the FHA domain; the sequence is VTVGRGFGVTYQLVSKICPLMISRNHCVLKQNPEGQWTIMDNKSLNGVWLNRARL. The required for interaction with PIWIL1 stretch occupies residues 68-72; sequence QNPEG. Position 157 is a phosphoserine (S157). The tract at residues 181-220 is disordered; that stretch reads CESGQPVKSQGKGEVASTPSDNLDPKLTALEPSKTTGAPI. The segment at 403 to 441 adopts an RING-type zinc-finger fold; the sequence is CIICSEYFIEAVTLNCAHSFCSYCINEWMKRKIECPICR.

Belongs to the RNF8 family. Homodimer. Forms a E2-E3 ubiquitin ligase complex composed of the RNF8 homodimer and a E2 heterodimer of UBE2N and UBE2V2. Interacts with class III E2s, including UBE2E1, UBE2E2, and UBE2E3 and with UBE2N. Interacts with RXRA. Interacts (via FHA domain) with ATM-phosphorylated MDC1. Interacts (via FHA domain) with 'Thr-4827' phosphorylated HERC2 (via C-terminus). Interacts with PIWIL1; leading to sequester RNF8 in the cytoplasm. Interacts with WRAP53/TCAB1. As to quaternary structure, (Microbial infection) Interacts (via FHA domain) with phosphorylated human herpesvirus 1 ICP0 protein; leading to RNF8 degradation by the proteasome. Autoubiquitinated through 'Lys-48' and 'Lys-63' of ubiquitin. 'Lys-63' polyubiquitination is mediated by UBE2N. 'Lys-29'-type polyubiquitination is also observed, but it doesn't require its own functional RING-type zinc finger. As to expression, ubiquitous. In fetal tissues, highest expression in brain, thymus and liver. In adult tissues, highest levels in brain and testis, lowest levels in peripheral blood cells.

The protein localises to the nucleus. The protein resides in the cytoplasm. Its subcellular location is the midbody. It localises to the chromosome. It is found in the telomere. The enzyme catalyses S-ubiquitinyl-[E2 ubiquitin-conjugating enzyme]-L-cysteine + [acceptor protein]-L-lysine = [E2 ubiquitin-conjugating enzyme]-L-cysteine + N(6)-ubiquitinyl-[acceptor protein]-L-lysine.. The protein operates within protein modification; protein ubiquitination. In terms of biological role, E3 ubiquitin-protein ligase that plays a key role in DNA damage signaling via 2 distinct roles: by mediating the 'Lys-63'-linked ubiquitination of histones H2A and H2AX and promoting the recruitment of DNA repair proteins at double-strand breaks (DSBs) sites, and by catalyzing 'Lys-48'-linked ubiquitination to remove target proteins from DNA damage sites. Following DNA DSBs, it is recruited to the sites of damage by ATM-phosphorylated MDC1 and catalyzes the 'Lys-63'-linked ubiquitination of histones H2A and H2AX, thereby promoting the formation of TP53BP1 and BRCA1 ionizing radiation-induced foci (IRIF). Also controls the recruitment of UIMC1-BRCC3 (RAP80-BRCC36) and PAXIP1/PTIP to DNA damage sites. Promotes the recruitment of NBN to DNA damage sites by catalyzing 'Lys-6'-linked ubiquitination of NBN. Also recruited at DNA interstrand cross-links (ICLs) sites and catalyzes 'Lys-63'-linked ubiquitination of histones H2A and H2AX, leading to recruitment of FAAP20/C1orf86 and Fanconi anemia (FA) complex, followed by interstrand cross-link repair. H2A ubiquitination also mediates the ATM-dependent transcriptional silencing at regions flanking DSBs in cis, a mechanism to avoid collision between transcription and repair intermediates. Promotes the formation of 'Lys-63'-linked polyubiquitin chains via interactions with the specific ubiquitin-conjugating UBE2N/UBC13 and ubiquitinates non-histone substrates such as PCNA. Substrates that are polyubiquitinated at 'Lys-63' are usually not targeted for degradation. Also catalyzes the formation of 'Lys-48'-linked polyubiquitin chains via interaction with the ubiquitin-conjugating UBE2L6/UBCH8, leading to degradation of substrate proteins such as CHEK2, JMJD2A/KDM4A and KU80/XRCC5: it is still unclear how the preference toward 'Lys-48'- versus 'Lys-63'-linked ubiquitination is regulated but it could be due to RNF8 ability to interact with specific E2 specific ligases. For instance, interaction with phosphorylated HERC2 promotes the association between RNF8 and UBE2N/UBC13 and favors the specific formation of 'Lys-63'-linked ubiquitin chains. Promotes non-homologous end joining (NHEJ) by promoting the 'Lys-48'-linked ubiquitination and degradation the of KU80/XRCC5. Following DNA damage, mediates the ubiquitination and degradation of JMJD2A/KDM4A in collaboration with RNF168, leading to unmask H4K20me2 mark and promote the recruitment of TP53BP1 at DNA damage sites. Following DNA damage, mediates the ubiquitination and degradation of POLD4/p12, a subunit of DNA polymerase delta. In the absence of POLD4, DNA polymerase delta complex exhibits higher proofreading activity. In addition to its function in damage signaling, also plays a role in higher-order chromatin structure by mediating extensive chromatin decondensation. Involved in the activation of ATM by promoting histone H2B ubiquitination, which indirectly triggers histone H4 'Lys-16' acetylation (H4K16ac), establishing a chromatin environment that promotes efficient activation of ATM kinase. Required in the testis, where it plays a role in the replacement of histones during spermatogenesis. At uncapped telomeres, promotes the joining of deprotected chromosome ends by inducing H2A ubiquitination and TP53BP1 recruitment, suggesting that it may enhance cancer development by aggravating telomere-induced genome instability in case of telomeric crisis. Promotes the assembly of RAD51 at DNA DSBs in the absence of BRCA1 and TP53BP1 Also involved in class switch recombination in immune system, via its role in regulation of DSBs repair. May be required for proper exit from mitosis after spindle checkpoint activation and may regulate cytokinesis. May play a role in the regulation of RXRA-mediated transcriptional activity. Not involved in RXRA ubiquitination by UBE2E2. This chain is E3 ubiquitin-protein ligase RNF8, found in Homo sapiens (Human).